The chain runs to 222 residues: MADS-box transcription factor 26 (222 aa).

Residues 1-61 (MARGKVQLRR…GKLYDLATTG (61 aa)) enclose the MADS-box domain. A K-box domain is found at 85–176 (RMDPKQEAMV…QEKIVEQNGL (92 aa)).

It localises to the nucleus. Its function is as follows. Probable transcription factor. The protein is MADS-box transcription factor 26 (MADS26) of Oryza sativa subsp. indica (Rice).